A 453-amino-acid polypeptide reads, in one-letter code: UDP-N-acetylmuramoylalanine--D-glutamate ligase (453 aa).

120–126 (GSNGKST) lines the ATP pocket.

Belongs to the MurCDEF family.

The protein resides in the cytoplasm. It carries out the reaction UDP-N-acetyl-alpha-D-muramoyl-L-alanine + D-glutamate + ATP = UDP-N-acetyl-alpha-D-muramoyl-L-alanyl-D-glutamate + ADP + phosphate + H(+). Its pathway is cell wall biogenesis; peptidoglycan biosynthesis. Cell wall formation. Catalyzes the addition of glutamate to the nucleotide precursor UDP-N-acetylmuramoyl-L-alanine (UMA). The chain is UDP-N-acetylmuramoylalanine--D-glutamate ligase from Nitrosococcus oceani (strain ATCC 19707 / BCRC 17464 / JCM 30415 / NCIMB 11848 / C-107).